Reading from the N-terminus, the 691-residue chain is Mediator of RNA polymerase II transcription subunit 17 (691 aa).

The stretch at 158-185 forms a coiled coil; sequence KLESFDAAANKLLQSAQRLEEDIAAETK.

It belongs to the Mediator complex subunit 17 family. As to quaternary structure, component of the Mediator complex.

The protein localises to the nucleus. Functionally, component of the Mediator complex, a coactivator involved in the regulated transcription of nearly all RNA polymerase II-dependent genes. Mediator functions as a bridge to convey information from gene-specific regulatory proteins to the basal RNA polymerase II transcription machinery. Mediator is recruited to promoters by direct interactions with regulatory proteins and serves as a scaffold for the assembly of a functional preinitiation complex with RNA polymerase II and the general transcription factors. The sequence is that of Mediator of RNA polymerase II transcription subunit 17 (SRB4) from Coccidioides immitis (strain RS) (Valley fever fungus).